A 148-amino-acid chain; its full sequence is Ubiquitin-conjugating enzyme E2 11 (148 aa).

Residues 1–147 (MASKRILKEL…ARSWTQKYAM (147 aa)) enclose the UBC core domain. The active-site Glycyl thioester intermediate is Cys-85.

This sequence belongs to the ubiquitin-conjugating enzyme family. As to quaternary structure, interacts with the E3 ubiquitin-protein ligases MBR1 and MBR2. Ubiquitously expressed. Mainly in petals.

It carries out the reaction S-ubiquitinyl-[E1 ubiquitin-activating enzyme]-L-cysteine + [E2 ubiquitin-conjugating enzyme]-L-cysteine = [E1 ubiquitin-activating enzyme]-L-cysteine + S-ubiquitinyl-[E2 ubiquitin-conjugating enzyme]-L-cysteine.. It functions in the pathway protein modification; protein ubiquitination. In terms of biological role, accepts the ubiquitin from the E1 complex and catalyzes its covalent attachment to other proteins. Mediates the selective degradation of short-lived and abnormal proteins. The chain is Ubiquitin-conjugating enzyme E2 11 (UBC11) from Arabidopsis thaliana (Mouse-ear cress).